We begin with the raw amino-acid sequence, 107 residues long: Probable monothiol glutaredoxin 2 (107 aa).

The Glutaredoxin domain occupies 7–107 (FKFIENEIKN…LEKMLKAYTR (101 aa)). Lys-24 is a glutathione binding site. [2Fe-2S] cluster is bound at residue Cys-32. Glutathione is bound by residues Arg-61, Phe-73, and 86-87 (CD).

This sequence belongs to the glutaredoxin family. Monothiol subfamily.

The protein is Probable monothiol glutaredoxin 2 (grxC2) of Rickettsia conorii (strain ATCC VR-613 / Malish 7).